The following is a 296-amino-acid chain: tRNA dimethylallyltransferase (296 aa).

8 to 15 is an ATP binding site; the sequence is GPTGSGKT. 10–15 is a substrate binding site; the sequence is TGSGKT. Residues 32 to 35 are interaction with substrate tRNA; the sequence is DSRQ.

The protein belongs to the IPP transferase family. As to quaternary structure, monomer. Requires Mg(2+) as cofactor.

It catalyses the reaction adenosine(37) in tRNA + dimethylallyl diphosphate = N(6)-dimethylallyladenosine(37) in tRNA + diphosphate. Catalyzes the transfer of a dimethylallyl group onto the adenine at position 37 in tRNAs that read codons beginning with uridine, leading to the formation of N6-(dimethylallyl)adenosine (i(6)A). This Leptospira biflexa serovar Patoc (strain Patoc 1 / Ames) protein is tRNA dimethylallyltransferase.